The sequence spans 362 residues: 3-dehydroquinate synthase (362 aa).

NAD(+)-binding positions include 71-76 (DGEQYK), 105-109 (GVIGD), 129-130 (TT), lysine 142, lysine 151, and 169-172 (CLKT). 3 residues coordinate Zn(2+): glutamate 184, histidine 247, and histidine 264.

It belongs to the sugar phosphate cyclases superfamily. Dehydroquinate synthase family. Co(2+) is required as a cofactor. Requires Zn(2+) as cofactor. NAD(+) serves as cofactor.

Its subcellular location is the cytoplasm. It catalyses the reaction 7-phospho-2-dehydro-3-deoxy-D-arabino-heptonate = 3-dehydroquinate + phosphate. It participates in metabolic intermediate biosynthesis; chorismate biosynthesis; chorismate from D-erythrose 4-phosphate and phosphoenolpyruvate: step 2/7. Catalyzes the conversion of 3-deoxy-D-arabino-heptulosonate 7-phosphate (DAHP) to dehydroquinate (DHQ). This is 3-dehydroquinate synthase from Salmonella schwarzengrund (strain CVM19633).